The chain runs to 100 residues: Urease subunit gamma (100 aa).

This sequence belongs to the urease gamma subunit family. Heterotrimer of UreA (gamma), UreB (beta) and UreC (alpha) subunits. Three heterotrimers associate to form the active enzyme.

Its subcellular location is the cytoplasm. It catalyses the reaction urea + 2 H2O + H(+) = hydrogencarbonate + 2 NH4(+). Its pathway is nitrogen metabolism; urea degradation; CO(2) and NH(3) from urea (urease route): step 1/1. This chain is Urease subunit gamma, found in Polynucleobacter asymbioticus (strain DSM 18221 / CIP 109841 / QLW-P1DMWA-1) (Polynucleobacter necessarius subsp. asymbioticus).